Consider the following 223-residue polypeptide: Deoxyribose-phosphate aldolase (223 aa).

The Proton donor/acceptor role is filled by Asp-92. Residue Lys-154 is the Schiff-base intermediate with acetaldehyde of the active site. Lys-182 functions as the Proton donor/acceptor in the catalytic mechanism.

Belongs to the DeoC/FbaB aldolase family. DeoC type 1 subfamily.

The protein resides in the cytoplasm. It catalyses the reaction 2-deoxy-D-ribose 5-phosphate = D-glyceraldehyde 3-phosphate + acetaldehyde. It participates in carbohydrate degradation; 2-deoxy-D-ribose 1-phosphate degradation; D-glyceraldehyde 3-phosphate and acetaldehyde from 2-deoxy-alpha-D-ribose 1-phosphate: step 2/2. In terms of biological role, catalyzes a reversible aldol reaction between acetaldehyde and D-glyceraldehyde 3-phosphate to generate 2-deoxy-D-ribose 5-phosphate. The chain is Deoxyribose-phosphate aldolase from Haemophilus influenzae (strain PittEE).